The following is a 1953-amino-acid chain: Protein BNI1 (1953 aa).

4 disordered regions span residues Met1 to Leu152, Met230 to Ser258, Lys263 to Leu282, and Thr287 to Leu306. Residues Ala31–Thr40 show a composition bias toward low complexity. Polar residues-rich tracts occupy residues Gly41–Met100 and Val110–Thr143. One can recognise a GBD/FH3 domain in the interval Glu174–Glu696. Low complexity predominate over residues Ala232–Ala246. The span at Lys263 to Tyr278 shows a compositional bias: polar residues. A phosphoserine mark is found at Ser311 and Ser325. The interval Leu312–Pro337 is disordered. 3 coiled-coil regions span residues Gln712 to Asn807, Asn864 to Lys894, and Asn928 to Phe981. 3 disordered regions span residues Ile990 to Pro1014, His1040 to Leu1094, and Thr1149 to Ser1330. Residues Ser1053–Thr1337 enclose the FH1 domain. Residues Ser1085 and Ser1170 each carry the phosphoserine modification. Residues Asp1184–Ala1211 are compositionally biased toward basic and acidic residues. Polar residues predominate over residues Ser1217–Ser1237. Pro residues predominate over residues Gln1238 to Pro1250. A compositionally biased stretch (basic and acidic residues) spans Ser1257–Lys1270. A compositionally biased stretch (pro residues) spans Pro1278 to Met1292. Residues Ser1338 and Ser1344 each carry the phosphoserine modification. Positions Phe1348–Glu1766 constitute an FH2 domain. Residues Lys1732–Ala1811 are a coiled coil. Over residues Gln1768 to Glu1779 the composition is skewed to basic and acidic residues. Disordered stretches follow at residues Gln1768–Arg1797, Lys1809–Asp1844, and Pro1872–Gln1899. The 35-residue stretch at Asp1792–Leu1826 folds into the DAD domain. Residues Ala1821–Lys1830 show a composition bias toward basic residues. Polar residues predominate over residues Val1880–Leu1896. Thr1918 is subject to Phosphothreonine.

Belongs to the formin homology family. BNI1 subfamily. In terms of assembly, homodimer, and possibly also homotetramer. Interacts with PFY1 via the FH1 domain and with actin via the FH2 domain.

It is found in the cell membrane. The protein localises to the cell projection. It localises to the ruffle membrane. The protein resides in the cytoplasm. Its subcellular location is the cytoskeleton. Its function is as follows. Required for the assembly of F-actin structures, such as actin cables and stress fibers. Nucleates actin filaments. Binds to the barbed end of the actin filament and acts as a leaky capper, slowing both polymerization and depolymerization. Protects the growing actin fiber from tight capping proteins and so increases the time of elongation and the total amount of F-actin. May organize microtubules by mediating spindle positioning and movement in the budding process. Potential target of the RHO family members. In Saccharomyces cerevisiae (strain ATCC 204508 / S288c) (Baker's yeast), this protein is Protein BNI1 (BNI1).